Reading from the N-terminus, the 256-residue chain is Large ribosomal subunit protein bL28m (256 aa).

The transit peptide at 1 to 55 (MPLHKYPVWLWKRLQLREGICSRLPGHYLRSLEEERTPTPVHYRPHGAKFKINPK) directs the protein to the mitochondrion.

This sequence belongs to the bacterial ribosomal protein bL28 family. In terms of assembly, component of the mitochondrial large ribosomal subunit (mt-LSU). Mature mammalian 55S mitochondrial ribosomes consist of a small (28S) and a large (39S) subunit. The 28S small subunit contains a 12S ribosomal RNA (12S mt-rRNA) and 30 different proteins. The 39S large subunit contains a 16S rRNA (16S mt-rRNA), a copy of mitochondrial valine transfer RNA (mt-tRNA(Val)), which plays an integral structural role, and 52 different proteins. Interacts with OXA1L. Found in a variety of normal tissues including spleen, testes, thymus, liver, kidney, brain, adrenal, lung and retinal tissue.

Its subcellular location is the mitochondrion. This chain is Large ribosomal subunit protein bL28m (MRPL28), found in Homo sapiens (Human).